Here is a 176-residue protein sequence, read N- to C-terminus: Peroxiredoxin AHP1 (176 aa).

Ser2 carries the N-acetylserine modification. The Thioredoxin domain maps to 9–176; that stretch reads FPAGDYKFQY…SSVESVLAHL (168 aa). Position 28 is a phosphoserine (Ser28). Lys32 is covalently cross-linked (Glycyl lysine isopeptide (Lys-Gly) (interchain with G-Cter in URM1)). A Glycyl lysine isopeptide (Lys-Gly) (interchain with G-Cter in ubiquitin); alternate cross-link involves residue Lys48. A Glycyl lysine isopeptide (Lys-Gly) (interchain with G-Cter in URM1); alternate cross-link involves residue Lys48. Position 59 is a phosphoserine (Ser59). Catalysis depends on Cys62, which acts as the Cysteine sulfenic acid (-SOH) intermediate. Cys62 carries the cysteine persulfide modification. Lys79 is covalently cross-linked (Glycyl lysine isopeptide (Lys-Gly) (interchain with G-Cter in URM1)). Lys81 participates in a covalent cross-link: Glycyl lysine isopeptide (Lys-Gly) (interchain with G-Cter in ubiquitin); alternate. Residue Lys81 forms a Glycyl lysine isopeptide (Lys-Gly) (interchain with G-Cter in URM1); alternate linkage. Residue Lys107 forms a Glycyl lysine isopeptide (Lys-Gly) (interchain with G-Cter in URM1) linkage. Lys113 is covalently cross-linked (Glycyl lysine isopeptide (Lys-Gly) (interchain with G-Cter in ubiquitin)). Ser116 carries the post-translational modification Phosphoserine. A Cysteine persulfide modification is found at Cys120. A Glycyl lysine isopeptide (Lys-Gly) (interchain with G-Cter in URM1) cross-link involves residue Lys124. A Glycyl lysine isopeptide (Lys-Gly) (interchain with G-Cter in URM1); alternate cross-link involves residue Lys156. Residue Lys156 forms a Glycyl lysine isopeptide (Lys-Gly) (interchain with G-Cter in SUMO); alternate linkage.

This sequence belongs to the peroxiredoxin family. Prx5 subfamily. In terms of assembly, homodimer; disulfide-linked, upon oxidation. Post-translationally, conjugated to URM1, a ubiquitin-like protein, in response to oxidative stresses. The attachment of URM1 to lysine residues exclusively depends on the presence of a peroxidatic cysteine in the target protein, with low specificity for the particular residue, motif, or structural context at which urmylation can occur. The URM1-conjugation reaction is mechanistically and directly coupled to the process of cysteine persulfidation, transfering the sulfur atom of the URM1 thiocarboxyl group to redox-active cysteine residues in the target protein if it is exposed to oxidative conditions. Persulfidated on specific redox-active cysteine residues. Persulfidation (also called protein S-sulfhydration) may provide a molecular mechanism that enables cells to protect vulnerable cysteine residues from reactive oxygen species (ROS) under stress conditions.

It is found in the cytoplasm. The catalysed reaction is a hydroperoxide + [thioredoxin]-dithiol = an alcohol + [thioredoxin]-disulfide + H2O. In terms of biological role, thiol-specific peroxidase that catalyzes the reduction of hydrogen peroxide and organic hydroperoxides to water and alcohols, respectively. Plays a role in cell protection against oxidative stress by detoxifying peroxides and as sensor of hydrogen peroxide-mediated signaling events. Preferentially eliminates organic peroxides rather than hydrogen peroxide. Relays alkyl hydroperoxides as a signal to the transcription factor CAD1/YAP2 by inducing the formation of intramolecular disulfide bonds in CAD1, which causes its nuclear accumulation and activation. Involved in cellular Mn(2+) homeostasis. The protein is Peroxiredoxin AHP1 of Saccharomyces cerevisiae (strain ATCC 204508 / S288c) (Baker's yeast).